The following is a 231-amino-acid chain: ADP-ribosylation factor-like protein 6-interacting protein 4 (231 aa).

Residues 1-19 (MAHVSSRKRSRSRSRSRGR) are compositionally biased toward basic residues. A disordered region spans residues 1 to 154 (MAHVSSRKRS…EDNDGPVLTD (154 aa)). A compositionally biased stretch (basic and acidic residues) spans 20 to 34 (RGSEKRSKRSSKDSS). The segment covering 64–89 (TSRSSSSSSSSSSSSSSSSTSSSSSS) has biased composition (low complexity). Positions 92–119 (RKKRGKHKDKKKRKKKKKRKKKMKRKGK) are enriched in basic residues. 2 positions are modified to phosphoserine: Ser-142 and Ser-176. A Glycyl lysine isopeptide (Lys-Gly) (interchain with G-Cter in SUMO2) cross-link involves residue Lys-193.

This sequence belongs to the ARL6IP4 family. As to quaternary structure, interacts with ARL6. Interacts with ZCCHC17. Interacts with SRSF2.

It localises to the nucleus. Its subcellular location is the nucleolus. It is found in the nucleus speckle. Functionally, involved in modulating alternative pre-mRNA splicing with either 5' distal site activation or preferential use of 3' proximal site. This chain is ADP-ribosylation factor-like protein 6-interacting protein 4 (Arl6ip4), found in Rattus norvegicus (Rat).